Here is a 470-residue protein sequence, read N- to C-terminus: Na(+)/H(+) antiporter NhaA 2 (470 aa).

The next 11 membrane-spanning stretches (helical) occupy residues 34–54 (FLHIEAASGILLLVAAAIALL), 85–105 (LEWVVNDGLMAIFFFVVGMEI), 121–141 (ALPAAAALGGMLVPAGLYLLL), 150–170 (GWGVPMATDIAFAVGILTLLG), 179–199 (VLLLALAVIDDLGAIIVIAVF), 202–222 (SGVAITGLLVAALGIVGVFAM), 241–261 (WAGVYSAGIHPTIAGVIIGLI), 317–337 (SLIATLHPWVAFGIMPVFALA), 357–377 (LATATGLLVGKPLGVIGACWL), 395–415 (LLVLGSTAGIGFTMALFIAQL), and 423–443 (LAAGKLGVLAASGAAAVVALV).

Belongs to the NhaA Na(+)/H(+) (TC 2.A.33) antiporter family.

The protein localises to the cell inner membrane. The catalysed reaction is Na(+)(in) + 2 H(+)(out) = Na(+)(out) + 2 H(+)(in). In terms of biological role, na(+)/H(+) antiporter that extrudes sodium in exchange for external protons. This chain is Na(+)/H(+) antiporter NhaA 2, found in Myxococcus xanthus (strain DK1622).